The following is a 426-amino-acid chain: Cytochrome c biogenesis protein Ccs1 (426 aa).

A run of 3 helical transmembrane segments spans residues 11–31 (LKFA…GSII), 70–90 (NFWF…CTFF), and 153–173 (IAPV…IFAS).

The protein belongs to the Ccs1/CcsB family. As to quaternary structure, may interact with CcsA.

It localises to the plastid. The protein resides in the chloroplast thylakoid membrane. Its function is as follows. Required during biogenesis of c-type cytochromes (cytochrome c6 and cytochrome f) at the step of heme attachment. The polypeptide is Cytochrome c biogenesis protein Ccs1 (Heterosigma akashiwo (strain CCMP452 / OLISTH)).